Consider the following 159-residue polypeptide: Ribosomal RNA large subunit methyltransferase H (159 aa).

S-adenosyl-L-methionine is bound by residues L76, G108, and 127–132; that span reads FSKMTL.

Belongs to the RNA methyltransferase RlmH family. As to quaternary structure, homodimer.

It is found in the cytoplasm. The catalysed reaction is pseudouridine(1915) in 23S rRNA + S-adenosyl-L-methionine = N(3)-methylpseudouridine(1915) in 23S rRNA + S-adenosyl-L-homocysteine + H(+). Its function is as follows. Specifically methylates the pseudouridine at position 1915 (m3Psi1915) in 23S rRNA. The polypeptide is Ribosomal RNA large subunit methyltransferase H (Bacillus anthracis (strain CDC 684 / NRRL 3495)).